Consider the following 196-residue polypeptide: Holliday junction branch migration complex subunit RuvA (196 aa).

A domain I region spans residues 1–63; the sequence is MYDYIKGKLS…DDAHLLFGFH (63 aa). A domain II region spans residues 64–142; sequence TENEKEIFLN…EASGESATSR (79 aa). The segment at 143–148 is flexible linker; the sequence is KVSSEQ. A domain III region spans residues 148–196; the sequence is QNSNLEEAMEALLALGYKATELKKVKAFFEGTNETVEQYIKSSLKMLMK.

Belongs to the RuvA family. In terms of assembly, homotetramer. Forms an RuvA(8)-RuvB(12)-Holliday junction (HJ) complex. HJ DNA is sandwiched between 2 RuvA tetramers; dsDNA enters through RuvA and exits via RuvB. An RuvB hexamer assembles on each DNA strand where it exits the tetramer. Each RuvB hexamer is contacted by two RuvA subunits (via domain III) on 2 adjacent RuvB subunits; this complex drives branch migration. In the full resolvosome a probable DNA-RuvA(4)-RuvB(12)-RuvC(2) complex forms which resolves the HJ.

Its subcellular location is the cytoplasm. The RuvA-RuvB-RuvC complex processes Holliday junction (HJ) DNA during genetic recombination and DNA repair, while the RuvA-RuvB complex plays an important role in the rescue of blocked DNA replication forks via replication fork reversal (RFR). RuvA specifically binds to HJ cruciform DNA, conferring on it an open structure. The RuvB hexamer acts as an ATP-dependent pump, pulling dsDNA into and through the RuvAB complex. HJ branch migration allows RuvC to scan DNA until it finds its consensus sequence, where it cleaves and resolves the cruciform DNA. This is Holliday junction branch migration complex subunit RuvA from Streptococcus agalactiae serotype Ia (strain ATCC 27591 / A909 / CDC SS700).